Here is a 343-residue protein sequence, read N- to C-terminus: Calcium/calmodulin-dependent protein kinase type 1B (343 aa).

The Protein kinase domain maps to 15 to 270 (YEIREKLGSG…CQQALQHLWI (256 aa)). ATP contacts are provided by residues 21-29 (LGSGAFSEV) and Lys-44. The Proton acceptor role is filled by Asp-136. A calmodulin-binding region spans residues 290-311 (KNFARTHWKRAFNATSFLRHIR). Residues 314-343 (GQSPEGEEASRQCMTRHSHPGLGTSQSPKW) form a disordered region. A Phosphoserine modification is found at Ser-338.

This sequence belongs to the protein kinase superfamily. CAMK Ser/Thr protein kinase family. CaMK subfamily. Expressed at highest levels in adult brain, and expressed in embryo. In the adult brain detected at high levels in the anterior olfactory nuclei, piriform cortex, septal nuclei, bed nuclei of the stria terminalis, hippocampal pyramidal cells, dentate granule cells, amygdala, hypothalamic nuclei, parabrachial nucleus, and nucleus of the solitary tract. Expressed at lower levels in adult ovary and heart and at very low levels in testis, lung and muscle.

The protein resides in the cytoplasm. The protein localises to the nucleus. The catalysed reaction is L-seryl-[protein] + ATP = O-phospho-L-seryl-[protein] + ADP + H(+). The enzyme catalyses L-threonyl-[protein] + ATP = O-phospho-L-threonyl-[protein] + ADP + H(+). Its activity is regulated as follows. Activated by Ca(2+)/calmodulin. In terms of biological role, calcium/calmodulin-dependent protein kinase belonging to a proposed calcium-triggered signaling cascade. In vitro phosphorylates CREB1 and SYN1/synapsin I. Phosphorylates and activates CAMK1. This chain is Calcium/calmodulin-dependent protein kinase type 1B (Pnck), found in Mus musculus (Mouse).